The primary structure comprises 120 residues: MVNLNPKRSDEPVWWGLFGAGGTWFAMLTPVTILVLGIMVPLGILDADAMSYERVSGFVTSFIGALFTIATLALPMWHAMHRLHHGMHDLKFHTGVVGKIACYATAFLVSALAIIFVFMI.

The next 3 helical transmembrane spans lie at 25–45 (FAMLTPVTILVLGIMVPLGIL), 57–77 (GFVTSFIGALFTIATLALPMW), and 100–120 (IACYATAFLVSALAIIFVFMI).

The protein belongs to the FrdD family. In terms of assembly, part of an enzyme complex containing four subunits: a flavoprotein (FrdA), an iron-sulfur protein (FrdB), and two hydrophobic anchor proteins (FrdC and FrdD).

Its subcellular location is the cell inner membrane. Anchors the catalytic components of the fumarate reductase complex to the cell membrane, binds quinones. This chain is Fumarate reductase subunit D, found in Photobacterium profundum (strain SS9).